We begin with the raw amino-acid sequence, 331 residues long: tRNA N6-adenosine threonylcarbamoyltransferase (331 aa).

Fe cation contacts are provided by histidine 109, histidine 113, and tyrosine 130. Substrate-binding positions include 130 to 134 (YLSGG), aspartate 162, aspartate 183, and serine 262. A Fe cation-binding site is contributed by aspartate 290.

Belongs to the KAE1 / TsaD family. Fe(2+) is required as a cofactor.

The protein resides in the cytoplasm. The enzyme catalyses L-threonylcarbamoyladenylate + adenosine(37) in tRNA = N(6)-L-threonylcarbamoyladenosine(37) in tRNA + AMP + H(+). In terms of biological role, required for the formation of a threonylcarbamoyl group on adenosine at position 37 (t(6)A37) in tRNAs that read codons beginning with adenine. Is probably involved in the transfer of the threonylcarbamoyl moiety of threonylcarbamoyl-AMP (TC-AMP) to the N6 group of A37. This is tRNA N6-adenosine threonylcarbamoyltransferase from Saccharolobus islandicus (strain Y.G.57.14 / Yellowstone #1) (Sulfolobus islandicus).